A 306-amino-acid polypeptide reads, in one-letter code: Aspartate carbamoyltransferase catalytic subunit (306 aa).

R56 and T57 together coordinate carbamoyl phosphate. K84 lines the L-aspartate pocket. Residues R106, H134, and Q137 each coordinate carbamoyl phosphate. L-aspartate contacts are provided by R167 and R221. Carbamoyl phosphate-binding residues include G262 and P263.

The protein belongs to the aspartate/ornithine carbamoyltransferase superfamily. ATCase family. Heterododecamer (2C3:3R2) of six catalytic PyrB chains organized as two trimers (C3), and six regulatory PyrI chains organized as three dimers (R2).

The enzyme catalyses carbamoyl phosphate + L-aspartate = N-carbamoyl-L-aspartate + phosphate + H(+). The protein operates within pyrimidine metabolism; UMP biosynthesis via de novo pathway; (S)-dihydroorotate from bicarbonate: step 2/3. Functionally, catalyzes the condensation of carbamoyl phosphate and aspartate to form carbamoyl aspartate and inorganic phosphate, the committed step in the de novo pyrimidine nucleotide biosynthesis pathway. This is Aspartate carbamoyltransferase catalytic subunit from Desulforudis audaxviator (strain MP104C).